Here is a 144-residue protein sequence, read N- to C-terminus: UPF0102 protein BPSL3274 (144 aa).

The tract at residues 1 to 28 (MCHAREASPGTGEPEAAPRDNFPREAGS) is disordered. Residues 16 to 28 (AAPRDNFPREAGS) show a composition bias toward basic and acidic residues.

The protein belongs to the UPF0102 family.

The protein is UPF0102 protein BPSL3274 of Burkholderia pseudomallei (strain K96243).